The chain runs to 227 residues: NAD(P)H-quinone oxidoreductase subunit K, chloroplastic (227 aa).

Cys-43, Cys-44, Cys-108, and Cys-139 together coordinate [4Fe-4S] cluster.

Belongs to the complex I 20 kDa subunit family. As to quaternary structure, NDH is composed of at least 16 different subunits, 5 of which are encoded in the nucleus. The cofactor is [4Fe-4S] cluster.

It localises to the plastid. The protein resides in the chloroplast thylakoid membrane. It carries out the reaction a plastoquinone + NADH + (n+1) H(+)(in) = a plastoquinol + NAD(+) + n H(+)(out). The enzyme catalyses a plastoquinone + NADPH + (n+1) H(+)(in) = a plastoquinol + NADP(+) + n H(+)(out). NDH shuttles electrons from NAD(P)H:plastoquinone, via FMN and iron-sulfur (Fe-S) centers, to quinones in the photosynthetic chain and possibly in a chloroplast respiratory chain. The immediate electron acceptor for the enzyme in this species is believed to be plastoquinone. Couples the redox reaction to proton translocation, and thus conserves the redox energy in a proton gradient. The sequence is that of NAD(P)H-quinone oxidoreductase subunit K, chloroplastic from Pelargonium hortorum (Common geranium).